The primary structure comprises 618 residues: Prothrombin (618 aa).

The N-terminal stretch at Met1–Ser24 is a signal peptide. Residues Gln25–Arg43 constitute a propeptide that is removed on maturation. Residues Ala44 to Val90 enclose the Gla domain. 10 positions are modified to 4-carboxyglutamate: Glu50, Glu51, Glu58, Glu60, Glu63, Glu64, Glu69, Glu70, Glu73, and Glu76. Cysteines 61 and 66 form a disulfide. Disulfide bonds link Cys91–Cys104, Cys109–Cys187, Cys130–Cys170, Cys158–Cys182, Cys215–Cys293, Cys236–Cys276, Cys264–Cys288, Cys333–Cys479, Cys388–Cys404, and Cys533–Cys547. Kringle domains lie at Cys109–Cys187 and Cys215–Tyr292. Asn122 and Asn144 each carry an N-linked (GlcNAc...) asparagine glycan. Residues Ile361–Asp615 enclose the Peptidase S1 domain. The active-site Charge relay system is the His403. An N-linked (GlcNAc...) asparagine glycan is attached at Asn413. Asp459 functions as the Charge relay system in the catalytic mechanism. Residues Ala548–Val570 are high affinity receptor-binding region which is also known as the TP508 peptide. Asn553 carries N-linked (GlcNAc...) asparagine glycosylation. Cysteines 561 and 591 form a disulfide. Ser565 functions as the Charge relay system in the catalytic mechanism.

Belongs to the peptidase S1 family. As to quaternary structure, heterodimer (named alpha-thrombin) of a light and a heavy chain; disulfide-linked. Forms a heterodimer with SERPINA5. In plasma, interacts (via N-terminus) with alpha-1-microglobulin; this interaction does not prevent the activation of prothrombin to thrombin. In terms of processing, the gamma-carboxyglutamyl residues, which bind calcium ions, result from the carboxylation of glutamyl residues by a microsomal enzyme, the vitamin K-dependent carboxylase. The modified residues are necessary for the calcium-dependent interaction with a negatively charged phospholipid surface, which is essential for the conversion of prothrombin to thrombin. In the penultimate step of the coagulation cascade, prothrombin is converted to thrombin by the prothrombinase complex composed of factor Xa (F10), cofactor Va (F5), and phospholipids. This activation requires factor Xa-catalyzed sequential cleavage at 2 sites, Arg-311 and Arg-360, along 2 possible pathways. In the first pathway, the first cleavage occurs at Arg-311, leading to the formation of the inactive intermediate prethrombin-2. This pathway preferentially occurs on platelets and in the absence of cofactor Va. In the second pathway, the first cleavage occurs at Arg-360, which separates protease domain into 2 chains that remain connected through a disulfide bond and generates the active intermediate meizothrombin. The presence of cofactor Va directs activation along the meizothrombin pathway and greatly accelerates the rate of cleavage at Arg-360, but has a smaller effect on the cleavage of meizothrombin at Arg-311. Meizothrombin accumulates as an intermediate when prothrombinase is assembled on the membrane of red blood cells.

The enzyme catalyses Selective cleavage of Arg-|-Gly bonds in fibrinogen to form fibrin and release fibrinopeptides A and B.. With respect to regulation, activity is promoted in the presence of negatively charged surfaces, such as polyphosphate and dextran sulfate. Inhibited by SERPINA5. Functionally, thrombin, which cleaves bonds after Arg and Lys, converts fibrinogen to fibrin and activates factors V, VII, VIII, XIII, and, in complex with thrombomodulin, protein C. Functions in blood homeostasis, inflammation and wound healing. Activates coagulation factor XI (F11); activation is promoted by the contact with negatively charged surfaces. Triggers the production of pro-inflammatory cytokines, such as MCP-1/CCL2 and IL8/CXCL8, in endothelial cells. The protein is Prothrombin (F2) of Mus musculus (Mouse).